A 136-amino-acid polypeptide reads, in one-letter code: Histone H3.2 (136 aa).

The interval Met-1–Arg-43 is disordered. Lys-5 is subject to N6-methylated lysine. Lys-10 bears the N6-acetyllysine; alternate mark. Residue Lys-10 is modified to N6-methylated lysine; alternate. The residue at position 11 (Ser-11) is a Phosphoserine. Thr-12 is subject to Phosphothreonine. Position 15 is an N6-acetyllysine (Lys-15). An N6-acetyllysine; alternate mark is found at Lys-19 and Lys-24. Residues Lys-19 and Lys-24 each carry the N6-methylated lysine; alternate modification. Lys-28 is subject to N6-methylated lysine. Residue Ser-29 is modified to Phosphoserine. Lys-37 is subject to N6-methylated lysine.

Belongs to the histone H3 family. As to quaternary structure, the nucleosome is a histone octamer containing two molecules each of H2A, H2B, H3 and H4 assembled in one H3-H4 heterotetramer and two H2A-H2B heterodimers. The octamer wraps approximately 147 bp of DNA. Acetylation is generally linked to gene activation. Can be acetylated to form H3K9ac, H3K14ac, H3K18ac and H3K23ac. H3K9ac could compete with H3K9me and prevent gene silencing. H3K9ac is restricted to euchromatin. Post-translationally, methylated to form mainly H3K4me, H3K9me, H3K18me, H3K23me, H3K27me and H3K36me. H3K4me1/2/3, H3K9me3, H3K27me3 and H3K36me1/2/3 are typical marks for euchromatin, whereas heterochromatic chromocenters are enriched in H3K9me1/2 and H3K27me1/2. H2BK143ub1 is probably prerequisite for H3K4me. In terms of processing, can be phosphorylated to form H3S10ph, H3T11ph and H3S28ph. As to expression, expressed in bicellular pollen, root tips, shoot apices, young leaves and ovules.

It is found in the nucleus. Its subcellular location is the nucleolus. The protein resides in the chromosome. In terms of biological role, core component of nucleosome. Nucleosomes wrap and compact DNA into chromatin, limiting DNA accessibility to the cellular machineries which require DNA as a template. Histones thereby play a central role in transcription regulation, DNA repair, DNA replication and chromosomal stability. DNA accessibility is regulated via a complex set of post-translational modifications of histones, also called histone code, and nucleosome remodeling. In Lilium longiflorum (Trumpet lily), this protein is Histone H3.2 (YAH3).